We begin with the raw amino-acid sequence, 120 residues long: Seripauperin-13 (120 aa).

An N-terminal signal peptide occupies residues 1–25 (MVKLTSIAAGVAAIAATASATTTLA).

The protein belongs to the SRP1/TIP1 family. Seripauperin subfamily.

This is Seripauperin-13 (PAU13) from Saccharomyces cerevisiae (strain ATCC 204508 / S288c) (Baker's yeast).